Reading from the N-terminus, the 581-residue chain is Arginine--tRNA ligase (581 aa).

The 'HIGH' region signature appears at 126 to 136 (PNLAKEMHVGH).

This sequence belongs to the class-I aminoacyl-tRNA synthetase family. As to quaternary structure, monomer.

It is found in the cytoplasm. The enzyme catalyses tRNA(Arg) + L-arginine + ATP = L-arginyl-tRNA(Arg) + AMP + diphosphate. The chain is Arginine--tRNA ligase from Shewanella baltica (strain OS223).